The following is a 432-amino-acid chain: Glutamate-1-semialdehyde 2,1-aminomutase (432 aa).

K271 carries the post-translational modification N6-(pyridoxal phosphate)lysine.

The protein belongs to the class-III pyridoxal-phosphate-dependent aminotransferase family. HemL subfamily. As to quaternary structure, homodimer. Requires pyridoxal 5'-phosphate as cofactor.

It localises to the cytoplasm. It carries out the reaction (S)-4-amino-5-oxopentanoate = 5-aminolevulinate. It functions in the pathway porphyrin-containing compound metabolism; protoporphyrin-IX biosynthesis; 5-aminolevulinate from L-glutamyl-tRNA(Glu): step 2/2. It participates in porphyrin-containing compound metabolism; chlorophyll biosynthesis. This chain is Glutamate-1-semialdehyde 2,1-aminomutase, found in Prochlorococcus marinus (strain NATL2A).